The chain runs to 554 residues: MVCIQCEQTVQTPTAKGCSYTQGMCGKTADVSDLQDVLVFNLQGVSFWAELGRKYNIIDAEIDAWAPRAFFSTLTNVNFVPERITEYTEIAERYKIQLSTQVMAAAAAAGEALPELSPAAQFVLPATAEEIMNFAPEAAVNRGHEELHEDIIGLRLLCLYGLKGAAAYMEHANVLGQSEESICAEYHQIMAFLGTDPTDANALLETSMQIGLLNYRIMEILDRGETNTFGHPQPTQVNVKPVAGKCILVSGHDLHDLEKILQQTEGKGINVYTNGEMLPAHGYPELNKYPHLVGNFGSAWQNQQKEFANFPGAIVMTSNCLINPNVGQYADRLFTRSIVGWPGVVHIEGDDFSQVIECALAQEGIAHTEIEHMITVGFGRNALMAAAPAVINEVKAGNIKHFFLIGGCDGDKEERSYFTDIAVSAPEDSVILTLACGKYRFNKKEFGDINGIPRLLDVGQCNDTYSAIQLVLALAEEFDCGVNELPLSIVLSWFEQKAIVVLLTLFALGIKGIYTGPTAPAFLTDNLIKALQENFDMRSVGDVETDLATMLAGK.

Cysteine 3, cysteine 6, cysteine 18, and cysteine 25 together coordinate [2Fe-2S] cluster. Hybrid [4Fe-2O-2S] cluster-binding residues include histidine 252, glutamate 276, cysteine 320, cysteine 408, cysteine 436, cysteine 461, glutamate 495, and lysine 497. Cysteine 408 is subject to Cysteine persulfide.

This sequence belongs to the HCP family. The cofactor is [2Fe-2S] cluster. It depends on hybrid [4Fe-2O-2S] cluster as a cofactor.

Its subcellular location is the cytoplasm. It carries out the reaction A + NH4(+) + H2O = hydroxylamine + AH2 + H(+). Its function is as follows. Catalyzes the reduction of hydroxylamine to form NH(3) and H(2)O. The protein is Hydroxylamine reductase of Photobacterium profundum (strain SS9).